A 211-amino-acid chain; its full sequence is Abscisic acid receptor PYL7 (211 aa).

The tract at residues 29–180 (HHCRENQCTS…NLKSLACVSE (152 aa)) is START-like. Cystine bridges form between cysteine 31/cysteine 161 and cysteine 36/cysteine 161. Residues lysine 65, 93 to 98 (ATTSTE), 120 to 126 (RLKNYSS), and glutamate 145 each bind abscisate. Residues 89 to 93 (SGLPA) carry the Gate loop motif. Positions 119 to 121 (HRL) match the Latch loop motif.

It belongs to the PYR/PYL/RCAR abscisic acid intracellular receptor family. In terms of assembly, homodimer. Binds ABA on one subunit only. Binds to CARs protein in an ABA-independent manner, both at the plasma membrane and in the nucleus. Interacts with ABI1, and possibly with other PP2Cs.

The protein localises to the cytoplasm. Its subcellular location is the nucleus. It is found in the cell membrane. Functionally, receptor for abscisic acid (ABA) required for ABA-mediated responses such as stomatal closure and germination inhibition. Inhibits the activity of group-A protein phosphatases type 2C (PP2Cs) when activated by ABA. The polypeptide is Abscisic acid receptor PYL7 (PYL7) (Arabidopsis thaliana (Mouse-ear cress)).